A 109-amino-acid chain; its full sequence is Small ribosomal subunit protein bS6 (109 aa).

This sequence belongs to the bacterial ribosomal protein bS6 family.

Functionally, binds together with bS18 to 16S ribosomal RNA. The protein is Small ribosomal subunit protein bS6 of Anaplasma phagocytophilum (strain HZ).